The sequence spans 293 residues: MADEKKQLLIVTGMSGAGKTVVAHDLEDMGYFVVDNLPPTLLGSFWDLINNSNDFHKVAVVIDLRVKAFYTDLLDEVNSLEDNGNVQATILYLDASDDVLVARYKETRRLPPLANNGKGRLLDGIQEERRILTPIKNRSNYIVDTSNLSTKELKQKLINTFSDKKRQPFSIEVMSFGFKYGMPIDADIVMDVRFLPNPFYIPELRPFTGLDKRVFDYVMNKEETQVFYKKLLDMLETAIPGYIKEGKEKLTIAIGCTGGQHRSVSIAQQLARDLSKKYPVDITHREISRYIRK.

Position 13–20 (13–20 (GMSGAGKT)) interacts with ATP. 63–66 (DLRV) contributes to the GTP binding site.

This sequence belongs to the RapZ-like family.

Its function is as follows. Displays ATPase and GTPase activities. In Lactobacillus acidophilus (strain ATCC 700396 / NCK56 / N2 / NCFM), this protein is Nucleotide-binding protein LBA0691.